A 265-amino-acid chain; its full sequence is Mlc titration factor A (265 aa).

4 residues coordinate Zn(2+): histidine 111, histidine 148, histidine 152, and glutamate 211.

The protein belongs to the MtfA family. Interacts with Mlc. Requires Zn(2+) as cofactor.

The protein localises to the cytoplasm. In terms of biological role, involved in the modulation of the activity of the glucose-phosphotransferase system (glucose-PTS). Interacts with the transcriptional repressor Mlc, preventing its interaction with DNA and leading to the modulation of expression of genes regulated by Mlc, including ptsG, which encodes the PTS system glucose-specific EIICB component. Its function is as follows. Shows zinc-dependent metallopeptidase activity. The sequence is that of Mlc titration factor A from Salmonella choleraesuis (strain SC-B67).